We begin with the raw amino-acid sequence, 464 residues long: Arginine biosynthesis bifunctional protein ArgJ, mitochondrial (464 aa).

The N-terminal 22 residues, 1-22 (MAASFKALPQQLTLTRSFARCY), are a transit peptide targeting the mitochondrion. The substrate site is built by threonine 193, lysine 222, threonine 233, glutamate 320, asparagine 459, and threonine 464. Threonine 233 functions as the Nucleophile in the catalytic mechanism.

This sequence belongs to the ArgJ family. As to quaternary structure, heterodimer of an alpha and a beta chain. In terms of processing, the alpha and beta chains are autoproteolytically processed from a single precursor protein within the mitochondrion.

It is found in the mitochondrion matrix. It carries out the reaction N(2)-acetyl-L-ornithine + L-glutamate = N-acetyl-L-glutamate + L-ornithine. The catalysed reaction is L-glutamate + acetyl-CoA = N-acetyl-L-glutamate + CoA + H(+). It functions in the pathway amino-acid biosynthesis; L-arginine biosynthesis; L-ornithine and N-acetyl-L-glutamate from L-glutamate and N(2)-acetyl-L-ornithine (cyclic): step 1/1. Its pathway is amino-acid biosynthesis; L-arginine biosynthesis; N(2)-acetyl-L-ornithine from L-glutamate: step 1/4. Catalyzes two activities which are involved in the cyclic version of arginine biosynthesis: the synthesis of acetylglutamate from glutamate and acetyl-CoA, and of ornithine by transacetylation between acetylornithine and glutamate. The protein is Arginine biosynthesis bifunctional protein ArgJ, mitochondrial of Verticillium alfalfae (strain VaMs.102 / ATCC MYA-4576 / FGSC 10136) (Verticillium wilt of alfalfa).